A 136-amino-acid polypeptide reads, in one-letter code: Non-structural protein 1 (136 aa).

The protein belongs to the pneumovirus non-structural protein 1 family. In terms of assembly, monomer. Homomultimer. Heteromultimer with NS2. Interacts with the matrix protein M. Interacts with host ELOC and CUL2; this interaction allows NS1 to form an active E3 ligase with ELOC and CUL2. Interacts with host IRF3; this interaction leads to the disrupted association of IRF3 with CREBBP and thus reduced binding of IRF3 to the IFN-beta promoter. Interacts with host MAVS; this interaction prevents MAVS binding to RIGI and inhibits signaling pathway leading to interferon production. Interacts with host TRIM25 (via SPRY domain); this interaction suppresses RIGI ubiquitination and results in decreased interaction between RIGI and MAVS.

It is found in the host cytoplasm. Its subcellular location is the host mitochondrion. The protein localises to the host nucleus. Functionally, plays a major role in antagonizing the type I IFN-mediated antiviral response by degrading or inhibiting multiple cellular factors required for either IFN induction or response pathways. Acts cooperatively with NS2 to repress activation and nuclear translocation of host IFN-regulatory factor IRF3. Also disrupts the association of IRF3 with CREBBP. Interacts with host mitochondrial-associated membrane (MAM) MAVS and prevents the interaction with RIGI. Interacts with TRIM25 to suppress TRIM25-mediated RIGI ubiquitination and thereby RIGI-MAVS interaction. Together with NS2, participates in the proteasomal degradation of host STAT2, IRF3, IRF7, TBK1 and RIGI through a NS-degradasome involving CUL2 and Elongin-C. The degradasome requires an intact mitochondrial MAVS. Decreases the levels of host TRAF3 and IKBKE/IKK-epsilon. As functions other than disruptions of the type I IFN-mediated antiviral signaling pathways, induces host SOCS1 and SOCS3 expression. Suppresses premature apoptosis by an NF-kappa-B-dependent, interferon-independent mechanism and thus facilitates virus growth. Additionally, NS1 may serve some inhibitory role in viral transcription and RNA replication. Suppresses proliferation and activation of host CD103+ CD8+ cytotoxic T-lymphocytes and Th17 helper T-lymphocytes. This Bos taurus (Bovine) protein is Non-structural protein 1 (1C).